The sequence spans 641 residues: WW domain-binding protein 11 (641 aa).

The segment covering 1–11 (MGRRSTSSTKS) has biased composition (polar residues). The disordered stretch occupies residues 1–37 (MGRRSTSSTKSGKFMNPTDQARKEARKRELKKNKKQR). A required for nuclear import region spans residues 1-45 (MGRRSTSSTKSGKFMNPTDQARKEARKRELKKNKKQRMMVRAAVL). At lysine 13 the chain carries N6-acetyllysine. The span at 28–37 (RELKKNKKQR) shows a compositional bias: basic residues. Residues 75–133 (EKVLKDKRKKLRETFERILRLYEKENPDIYKELRKLEVEYEQKRAQLSQYFDAVKNAQH) adopt a coiled-coil conformation. Serine 181 carries the phosphoserine modification. The segment at 186-213 (LGHGVPRLPPGRKPPGPPPGPPPPQVVQ) is disordered. At arginine 192 the chain carries Omega-N-methylarginine. Residues 192-210 (RLPPGRKPPGPPPGPPPPQ) are compositionally biased toward pro residues. Residues 217–221 (RKVGF) form an interaction with PP1 region. Tyrosine 236 is subject to Phosphotyrosine. The disordered stretch occupies residues 236-552 (YSPELAQRGH…RPKADDTSAA (317 aa)). Serine 237 carries the post-translational modification Phosphoserine. Positions 253-263 (SEDDGYPEDMD) are enriched in acidic residues. Residues 276-304 (TDKSDGESDGDEFVHRDNGERDNNEEKKS) are compositionally biased toward basic and acidic residues. A phosphoserine mark is found at serine 279 and serine 283. An interaction with PP1 region spans residues 306 to 310 (LSVRF). Positions 351 to 365 (EFSEDDDEDDSDDSE) are enriched in acidic residues. Residues serine 353, serine 361, and serine 364 each carry the phosphoserine modification. Basic and acidic residues predominate over residues 366–380 (AEKQSQKQHKEESHS). Residues 386 to 404 (ASSQQQAPPQSVPPSQIQA) show a composition bias toward low complexity. Pro residues-rich tracts occupy residues 405–447 (PPMP…PPGM), 456–504 (RLLP…PPRP), and 510–530 (PLVP…PLPN). Residues 455–466 (PRLLPPGPPPGR) carry the PGR motif. A Glycyl lysine isopeptide (Lys-Gly) (interchain with G-Cter in SUMO2) cross-link involves residue lysine 557. At lysine 565 the chain carries N6-acetyllysine. Lysine 572 is covalently cross-linked (Glycyl lysine isopeptide (Lys-Gly) (interchain with G-Cter in SUMO2)). The tract at residues 587–623 (RENKGATAAPQRKSEDDSAVPLAKAAPKSGPSVPVSV) is disordered. Serine 600 is modified (phosphoserine).

In terms of assembly, interacts with PPP1CA, PPP1CB and PPP1CC. Interacts via the PGR motif with PQBP1 in the nucleus. Interacts with the WW domains of WBP4. As to expression, ubiquitous. Highly expressed in the heart, pancreas, kidney skeletal muscle, placenta and brain (at protein level). Weakly expressed in liver and lung.

The protein resides in the nucleus. It localises to the cytoplasm. In terms of biological role, activates pre-mRNA splicing. May inhibit PP1 phosphatase activity. In Homo sapiens (Human), this protein is WW domain-binding protein 11.